Here is a 285-residue protein sequence, read N- to C-terminus: Phosphatidylserine decarboxylase proenzyme (285 aa).

Active-site charge relay system; for autoendoproteolytic cleavage activity residues include Asp89, His146, and Ser252. The Schiff-base intermediate with substrate; via pyruvic acid; for decarboxylase activity role is filled by Ser252. Ser252 carries the post-translational modification Pyruvic acid (Ser); by autocatalysis.

It belongs to the phosphatidylserine decarboxylase family. PSD-B subfamily. Prokaryotic type I sub-subfamily. As to quaternary structure, heterodimer of a large membrane-associated beta subunit and a small pyruvoyl-containing alpha subunit. It depends on pyruvate as a cofactor. In terms of processing, is synthesized initially as an inactive proenzyme. Formation of the active enzyme involves a self-maturation process in which the active site pyruvoyl group is generated from an internal serine residue via an autocatalytic post-translational modification. Two non-identical subunits are generated from the proenzyme in this reaction, and the pyruvate is formed at the N-terminus of the alpha chain, which is derived from the carboxyl end of the proenzyme. The autoendoproteolytic cleavage occurs by a canonical serine protease mechanism, in which the side chain hydroxyl group of the serine supplies its oxygen atom to form the C-terminus of the beta chain, while the remainder of the serine residue undergoes an oxidative deamination to produce ammonia and the pyruvoyl prosthetic group on the alpha chain. During this reaction, the Ser that is part of the protease active site of the proenzyme becomes the pyruvoyl prosthetic group, which constitutes an essential element of the active site of the mature decarboxylase.

The protein resides in the cell membrane. It carries out the reaction a 1,2-diacyl-sn-glycero-3-phospho-L-serine + H(+) = a 1,2-diacyl-sn-glycero-3-phosphoethanolamine + CO2. It participates in phospholipid metabolism; phosphatidylethanolamine biosynthesis; phosphatidylethanolamine from CDP-diacylglycerol: step 2/2. Functionally, catalyzes the formation of phosphatidylethanolamine (PtdEtn) from phosphatidylserine (PtdSer). In Vibrio parahaemolyticus serotype O3:K6 (strain RIMD 2210633), this protein is Phosphatidylserine decarboxylase proenzyme.